We begin with the raw amino-acid sequence, 199 residues long: Elongation factor Ts (199 aa).

Residues 81–84 (TDFV) form an involved in Mg(2+) ion dislocation from EF-Tu region.

Belongs to the EF-Ts family.

The protein localises to the cytoplasm. Its function is as follows. Associates with the EF-Tu.GDP complex and induces the exchange of GDP to GTP. It remains bound to the aminoacyl-tRNA.EF-Tu.GTP complex up to the GTP hydrolysis stage on the ribosome. In Thermotoga sp. (strain RQ2), this protein is Elongation factor Ts.